We begin with the raw amino-acid sequence, 208 residues long: Kininogen-1b (208 aa).

A signal peptide spans 1–23 (MRLWFCLSFFIVLCLEHFPETLA). A compositionally biased stretch (basic and acidic residues) spans 27-44 (NVPESEEKTEQYLRDLPK). The segment at 27–208 (NVPESEEKTE…RGKFHSQSHV (182 aa)) is disordered.

It belongs to the bradykinin-related peptide family. Expressed by the skin glands.

The protein localises to the secreted. In terms of biological role, in vitro, produces constriction of guinea pig ileum smooth muscle. May target bradykinin receptors (BDKRB). This chain is Kininogen-1b, found in Bombina maxima (Giant fire-bellied toad).